A 289-amino-acid polypeptide reads, in one-letter code: Probable endonuclease 4 (289 aa).

Residues His-74, His-115, Glu-150, Asp-184, His-187, His-218, Asp-231, His-233, and Glu-263 each contribute to the Zn(2+) site.

The protein belongs to the AP endonuclease 2 family. Zn(2+) is required as a cofactor.

It carries out the reaction Endonucleolytic cleavage to 5'-phosphooligonucleotide end-products.. Functionally, endonuclease IV plays a role in DNA repair. It cleaves phosphodiester bonds at apurinic or apyrimidinic (AP) sites, generating a 3'-hydroxyl group and a 5'-terminal sugar phosphate. This chain is Probable endonuclease 4, found in Mycoplasma mycoides subsp. mycoides SC (strain CCUG 32753 / NCTC 10114 / PG1).